The chain runs to 319 residues: Ribonuclease Z (319 aa).

7 residues coordinate Zn(2+): His62, His64, Asp66, His67, His145, Asp216, and His274. Asp66 functions as the Proton acceptor in the catalytic mechanism.

Belongs to the RNase Z family. Homodimer. The cofactor is Zn(2+).

The enzyme catalyses Endonucleolytic cleavage of RNA, removing extra 3' nucleotides from tRNA precursor, generating 3' termini of tRNAs. A 3'-hydroxy group is left at the tRNA terminus and a 5'-phosphoryl group is left at the trailer molecule.. Its function is as follows. Zinc phosphodiesterase, which displays some tRNA 3'-processing endonuclease activity. Probably involved in tRNA maturation, by removing a 3'-trailer from precursor tRNA. In Synechococcus sp. (strain CC9902), this protein is Ribonuclease Z.